Consider the following 322-residue polypeptide: Lipoyl synthase (322 aa).

The [4Fe-4S] cluster site is built by cysteine 69, cysteine 74, cysteine 80, cysteine 95, cysteine 99, cysteine 102, and serine 309. A Radical SAM core domain is found at 81 to 298; sequence FNHGTATFMI…KEIALELGFT (218 aa).

Belongs to the radical SAM superfamily. Lipoyl synthase family. It depends on [4Fe-4S] cluster as a cofactor.

The protein localises to the cytoplasm. It carries out the reaction [[Fe-S] cluster scaffold protein carrying a second [4Fe-4S](2+) cluster] + N(6)-octanoyl-L-lysyl-[protein] + 2 oxidized [2Fe-2S]-[ferredoxin] + 2 S-adenosyl-L-methionine + 4 H(+) = [[Fe-S] cluster scaffold protein] + N(6)-[(R)-dihydrolipoyl]-L-lysyl-[protein] + 4 Fe(3+) + 2 hydrogen sulfide + 2 5'-deoxyadenosine + 2 L-methionine + 2 reduced [2Fe-2S]-[ferredoxin]. Its pathway is protein modification; protein lipoylation via endogenous pathway; protein N(6)-(lipoyl)lysine from octanoyl-[acyl-carrier-protein]: step 2/2. Its function is as follows. Catalyzes the radical-mediated insertion of two sulfur atoms into the C-6 and C-8 positions of the octanoyl moiety bound to the lipoyl domains of lipoate-dependent enzymes, thereby converting the octanoylated domains into lipoylated derivatives. The protein is Lipoyl synthase of Photobacterium profundum (strain SS9).